We begin with the raw amino-acid sequence, 293 residues long: Bifunctional protein FolD (293 aa).

Residues 165-167 (GRS), S190, and I231 contribute to the NADP(+) site.

Belongs to the tetrahydrofolate dehydrogenase/cyclohydrolase family. As to quaternary structure, homodimer.

The catalysed reaction is (6R)-5,10-methylene-5,6,7,8-tetrahydrofolate + NADP(+) = (6R)-5,10-methenyltetrahydrofolate + NADPH. It carries out the reaction (6R)-5,10-methenyltetrahydrofolate + H2O = (6R)-10-formyltetrahydrofolate + H(+). It functions in the pathway one-carbon metabolism; tetrahydrofolate interconversion. In terms of biological role, catalyzes the oxidation of 5,10-methylenetetrahydrofolate to 5,10-methenyltetrahydrofolate and then the hydrolysis of 5,10-methenyltetrahydrofolate to 10-formyltetrahydrofolate. The chain is Bifunctional protein FolD from Synechococcus sp. (strain WH7803).